The chain runs to 641 residues: 1-deoxy-D-xylulose-5-phosphate synthase (641 aa).

Residues His-78 and 119–121 contribute to the thiamine diphosphate site; that span reads AHS. Mg(2+) is bound at residue Asp-150. Thiamine diphosphate-binding positions include 151–152, Asn-179, Tyr-288, and Glu-370; that span reads GA. Asn-179 contacts Mg(2+).

This sequence belongs to the transketolase family. DXPS subfamily. As to quaternary structure, homodimer. Requires Mg(2+) as cofactor. It depends on thiamine diphosphate as a cofactor.

It carries out the reaction D-glyceraldehyde 3-phosphate + pyruvate + H(+) = 1-deoxy-D-xylulose 5-phosphate + CO2. Its pathway is metabolic intermediate biosynthesis; 1-deoxy-D-xylulose 5-phosphate biosynthesis; 1-deoxy-D-xylulose 5-phosphate from D-glyceraldehyde 3-phosphate and pyruvate: step 1/1. Functionally, catalyzes the acyloin condensation reaction between C atoms 2 and 3 of pyruvate and glyceraldehyde 3-phosphate to yield 1-deoxy-D-xylulose-5-phosphate (DXP). This is 1-deoxy-D-xylulose-5-phosphate synthase from Azorhizobium caulinodans (strain ATCC 43989 / DSM 5975 / JCM 20966 / LMG 6465 / NBRC 14845 / NCIMB 13405 / ORS 571).